Reading from the N-terminus, the 456-residue chain is tRNA modification GTPase MnmE (456 aa).

3 residues coordinate (6S)-5-formyl-5,6,7,8-tetrahydrofolate: arginine 24, glutamate 81, and lysine 120. A TrmE-type G domain is found at 216-379 (GMTVVIAGRP…LREHLKACMG (164 aa)). Residue asparagine 226 participates in K(+) binding. GTP-binding positions include 226–231 (NAGKSS), 245–251 (TEIAGTT), 270–273 (DTAG), 335–338 (NKAD), and 359–361 (SAR). Serine 230 serves as a coordination point for Mg(2+). The K(+) site is built by threonine 245, isoleucine 247, and threonine 250. Position 251 (threonine 251) interacts with Mg(2+). Lysine 456 contacts (6S)-5-formyl-5,6,7,8-tetrahydrofolate.

The protein belongs to the TRAFAC class TrmE-Era-EngA-EngB-Septin-like GTPase superfamily. TrmE GTPase family. Homodimer. Heterotetramer of two MnmE and two MnmG subunits. The cofactor is K(+).

The protein localises to the cytoplasm. Functionally, exhibits a very high intrinsic GTPase hydrolysis rate. Involved in the addition of a carboxymethylaminomethyl (cmnm) group at the wobble position (U34) of certain tRNAs, forming tRNA-cmnm(5)s(2)U34. The protein is tRNA modification GTPase MnmE of Pseudomonas syringae pv. tomato (strain ATCC BAA-871 / DC3000).